Consider the following 192-residue polypeptide: Potassium-transporting ATPase KdpC subunit (192 aa).

The helical transmembrane segment at 7 to 27 threads the bilayer; sequence PLIVIFAVLTAVTGLAYPAVM.

This sequence belongs to the KdpC family. In terms of assembly, the system is composed of three essential subunits: KdpA, KdpB and KdpC.

It is found in the cell inner membrane. In terms of biological role, part of the high-affinity ATP-driven potassium transport (or Kdp) system, which catalyzes the hydrolysis of ATP coupled with the electrogenic transport of potassium into the cytoplasm. This subunit acts as a catalytic chaperone that increases the ATP-binding affinity of the ATP-hydrolyzing subunit KdpB by the formation of a transient KdpB/KdpC/ATP ternary complex. This chain is Potassium-transporting ATPase KdpC subunit, found in Paraburkholderia phytofirmans (strain DSM 17436 / LMG 22146 / PsJN) (Burkholderia phytofirmans).